The chain runs to 458 residues: Glycine--tRNA ligase (458 aa).

Residues arginine 97 and glutamate 171 each contribute to the substrate site. ATP-binding positions include 203–205, 213–218, 287–288, and 331–334; these read RNE, FRTREF, EL, and GADR. Position 218-222 (218-222) interacts with substrate; sequence FEQME. A substrate-binding site is contributed by 327–331; the sequence is EPSLG.

The protein belongs to the class-II aminoacyl-tRNA synthetase family. Homodimer.

The protein localises to the cytoplasm. The catalysed reaction is tRNA(Gly) + glycine + ATP = glycyl-tRNA(Gly) + AMP + diphosphate. Functionally, catalyzes the attachment of glycine to tRNA(Gly). The protein is Glycine--tRNA ligase of Bacillus thuringiensis subsp. konkukian (strain 97-27).